A 222-amino-acid chain; its full sequence is Phosphoglycolate phosphatase (222 aa).

Residue Asp12 is the Nucleophile of the active site. Mg(2+)-binding residues include Asp12, Asp14, and Asp175.

This sequence belongs to the HAD-like hydrolase superfamily. CbbY/CbbZ/Gph/YieH family. The cofactor is Mg(2+).

It carries out the reaction 2-phosphoglycolate + H2O = glycolate + phosphate. It participates in organic acid metabolism; glycolate biosynthesis; glycolate from 2-phosphoglycolate: step 1/1. In terms of biological role, specifically catalyzes the dephosphorylation of 2-phosphoglycolate. Is involved in the dissimilation of the intracellular 2-phosphoglycolate formed during the DNA repair of 3'-phosphoglycolate ends, a major class of DNA lesions induced by oxidative stress. This is Phosphoglycolate phosphatase from Chromobacterium violaceum (strain ATCC 12472 / DSM 30191 / JCM 1249 / CCUG 213 / NBRC 12614 / NCIMB 9131 / NCTC 9757 / MK).